The following is a 392-amino-acid chain: MVNVEAIRKVQRAEGPATIMAIGTSTPPNAVDQSEYPDYYYFGSPTASTRPSSRRSFKRMCEKSMIKKRYMYLTETYWKRIQMFVPTWLLPLKARQDMVVVEVPKLGKEVQPKAIKGMGQPKSKINPLVFCTTSGVDMPGADYQLTKVFGLPPSVKRLMMYQQGCFAGGTVLRLAKDLAENNKGARVLVVCSEITAVTFRGPSDTHLDSLVGQALFGDGAAALIVGADPVPGVENPMFELVSAGQTILPDSDGAIDGHLREVGLTFHLLKVVPGLISKNIEKSLVEAFEPLGISDWNSLFWIAHPGGPAILDPGGDQTRPEARESCGNQACFSVSMATCQVFVCSSFSTRCEGSPKEEGLKTTGEGIEWGVLFGFGPGLTVETVVLHSLPTH.

C165 is a catalytic residue.

Belongs to the thiolase-like superfamily. Chalcone/stilbene synthases family.

It carries out the reaction (E)-4-coumaroyl-CoA + 3 malonyl-CoA + 3 H(+) = 2',4,4',6'-tetrahydroxychalcone + 3 CO2 + 4 CoA. The protein operates within secondary metabolite biosynthesis; flavonoid biosynthesis. The primary product of this enzyme is 4,2',4',6'-tetrahydroxychalcone (also termed naringenin-chalcone or chalcone) which can under specific conditions spontaneously isomerize into naringenin. This is Chalcone synthase (CHS) from Persea americana (Avocado).